We begin with the raw amino-acid sequence, 606 residues long: Fructan 6-exohydrolase (606 aa).

The N-terminal stretch at 1-21 (MAPNNGSWLVLSISMMLLSHG) is a signal peptide. N5 carries an N-linked (GlcNAc...) asparagine glycan. D70 is an active-site residue. N-linked (GlcNAc...) asparagine glycosylation is found at N110, N164, N193, N237, and N346. A disulfide bridge links C445 with C491. 4 N-linked (GlcNAc...) asparagine glycosylation sites follow: N564, N585, N590, and N593.

The protein belongs to the glycosyl hydrolase 32 family.

The catalysed reaction is Hydrolysis of terminal, non-reducing (2-&gt;6)-linked beta-D-fructofuranose residues in fructans.. Its activity is regulated as follows. Not inhibited by sucrose. In terms of biological role, hydrolyzes levan-type beta-(2-&gt;6)-linked fructans to fructose, but not inulin-type beta-(2-&gt;1)-linked fructans. The protein is Fructan 6-exohydrolase of Beta vulgaris (Sugar beet).